We begin with the raw amino-acid sequence, 121 residues long: MVFVTIIIIINISYNIYNIYTINENRFTFNAFLQSKKASFTFICIYVCISGGNMPLWAYILFRTFLHPSSSSNSVLCFRRHNQDYHNRIFFAFCCHHIWSLLPHHLSIFPIRRQFYLNSRQ.

Helical transmembrane passes span 2–22 (VFVT…IYTI), 42–62 (FICI…YILF), and 89–109 (IFFA…LSIF).

The protein resides in the membrane. This is an uncharacterized protein from Saccharomyces cerevisiae (strain ATCC 204508 / S288c) (Baker's yeast).